Here is a 276-residue protein sequence, read N- to C-terminus: NAD kinase (276 aa).

The Proton acceptor role is filled by aspartate 66. NAD(+) contacts are provided by residues 66–67 (DG), 139–140 (ND), aspartate 168, 179–184 (TAYNIS), and glutamine 234.

The protein belongs to the NAD kinase family. It depends on a divalent metal cation as a cofactor.

It localises to the cytoplasm. The enzyme catalyses NAD(+) + ATP = ADP + NADP(+) + H(+). In terms of biological role, involved in the regulation of the intracellular balance of NAD and NADP, and is a key enzyme in the biosynthesis of NADP. Catalyzes specifically the phosphorylation on 2'-hydroxyl of the adenosine moiety of NAD to yield NADP. This Campylobacter lari (strain RM2100 / D67 / ATCC BAA-1060) protein is NAD kinase.